A 221-amino-acid polypeptide reads, in one-letter code: 21 kDa seed protein (221 aa).

A signal peptide spans 1 to 26 (MKTATAVVLLLFAFTSKSYFFGVANA). Residues Cys-69 and Cys-116 are joined by a disulfide bond.

This sequence belongs to the protease inhibitor I3 (leguminous Kunitz-type inhibitor) family.

This is 21 kDa seed protein (ASP) from Theobroma cacao (Cacao).